The sequence spans 259 residues: NAD(P)H-quinone oxidoreductase subunit K 2 (259 aa).

[4Fe-4S] cluster-binding residues include C52, C53, C117, and C148.

It belongs to the complex I 20 kDa subunit family. NDH-1 can be composed of about 15 different subunits; different subcomplexes with different compositions have been identified which probably have different functions. Requires [4Fe-4S] cluster as cofactor.

The protein resides in the cellular thylakoid membrane. It catalyses the reaction a plastoquinone + NADH + (n+1) H(+)(in) = a plastoquinol + NAD(+) + n H(+)(out). The catalysed reaction is a plastoquinone + NADPH + (n+1) H(+)(in) = a plastoquinol + NADP(+) + n H(+)(out). In terms of biological role, NDH-1 shuttles electrons from an unknown electron donor, via FMN and iron-sulfur (Fe-S) centers, to quinones in the respiratory and/or the photosynthetic chain. The immediate electron acceptor for the enzyme in this species is believed to be plastoquinone. Couples the redox reaction to proton translocation, and thus conserves the redox energy in a proton gradient. Cyanobacterial NDH-1 also plays a role in inorganic carbon-concentration. The protein is NAD(P)H-quinone oxidoreductase subunit K 2 (ndhK2) of Cyanothece sp. (strain PCC 7425 / ATCC 29141).